The chain runs to 430 residues: Meiotically up-regulated gene 132 protein (430 aa).

It belongs to the UPF0300 family.

Its subcellular location is the mitochondrion. Functionally, has a role in meiosis. The chain is Meiotically up-regulated gene 132 protein (mug132) from Schizosaccharomyces pombe (strain 972 / ATCC 24843) (Fission yeast).